A 1809-amino-acid polypeptide reads, in one-letter code: Pyochelin synthetase PchF (1809 aa).

Positions F69–P490 are condensation/cyclization. The tract at residues F520–R915 is adenylation. The Carrier domain maps to A1407–P1488. At S1442 the chain carries O-(pantetheine 4'-phosphoryl)serine. The tract at residues L1584–Q1797 is thioesterase.

Belongs to the NRP synthetase family. Pantetheine 4'-phosphate is required as a cofactor.

It carries out the reaction holo-[peptidyl-carrier protein] + L-cysteine + ATP = L-cysteinyl-[peptidyl-carrier protein] + AMP + diphosphate. The protein operates within siderophore biosynthesis. Its function is as follows. Involved in the biosynthesis of the siderophore pyochelin. Adenylates L-cysteine and loads it onto its peptidyl carrier domain via a thioester linkage to the phosphopanthetheine moiety. Then forms a peptide bond between the salicyl-thiazolinyl intermediate bound to the second carrier domain of PchE and the cysteine bound to its own peptidyl carrier domain to form the salicyl-thiazolinyl-cysteinyl-S-PCP2 intermediate. It subsequently cyclizes the C-terminal cysteine to form the second thiazoline heterocycle in the salicyl-thiazolinyl-thiazolinyl-S-PCP2 intermediate. When this intermediate is released by the action of a thioesterase, it produces the tricyclic acid hydroxyphenyl-thiazolyl-thiazolinyl-carboxylic acid (HPTT-COOH), an advanced intermediate containing the aryl-4,2-bis-heterocyclic skeleton of the bithiazoline class of siderophores. The chain is Pyochelin synthetase PchF from Pseudomonas aeruginosa (strain UCBPP-PA14).